A 568-amino-acid polypeptide reads, in one-letter code: Zinc finger protein 76 (568 aa).

Residue Lys-24 forms a Glycyl lysine isopeptide (Lys-Gly) (interchain with G-Cter in SUMO2) linkage. Tandem repeats lie at residues 34–45 (IQLEDGTTAYIH), 62–73 (VQLEDGSMAYIH), and 88–99 (VQLEDGSTAYIH). The 3 X 12 AA approximate repeats stretch occupies residues 34-99 (IQLEDGTTAY…LEDGSTAYIH (66 aa)). 7 consecutive C2H2-type zinc fingers follow at residues 165–189 (FRCG…ERAH), 195–219 (YRCD…VRTH), 225–249 (YKCP…VRTH), 255–279 (FRCP…VRTH), 285–309 (YTCP…VRIH), 315–339 (YVCT…HVVH), and 345–368 (YTCS…RSAH). The tract at residues 365-402 (RSAHGELEATEESEQALYEQQQLEAASAAEESPPPKPT) is disordered. The segment covering 379–395 (QALYEQQQLEAASAAEE) has biased composition (low complexity).

Belongs to the krueppel C2H2-type zinc-finger protein family.

It is found in the nucleus. May be involved in transcriptional regulation. This chain is Zinc finger protein 76 (Znf76), found in Mus musculus (Mouse).